Reading from the N-terminus, the 636-residue chain is Biosynthetic arginine decarboxylase (636 aa).

Position 101 is an N6-(pyridoxal phosphate)lysine (Lys101). A substrate-binding site is contributed by 286 to 296; it reads FDVGGGLAVDY.

It belongs to the Orn/Lys/Arg decarboxylase class-II family. SpeA subfamily. It depends on Mg(2+) as a cofactor. Requires pyridoxal 5'-phosphate as cofactor.

It carries out the reaction L-arginine + H(+) = agmatine + CO2. It functions in the pathway amine and polyamine biosynthesis; agmatine biosynthesis; agmatine from L-arginine: step 1/1. Catalyzes the biosynthesis of agmatine from arginine. The protein is Biosynthetic arginine decarboxylase of Shewanella amazonensis (strain ATCC BAA-1098 / SB2B).